The chain runs to 465 residues: Na(+)-translocating NADH-quinone reductase subunit A (465 aa).

This sequence belongs to the NqrA family. Composed of six subunits; NqrA, NqrB, NqrC, NqrD, NqrE and NqrF.

It carries out the reaction a ubiquinone + n Na(+)(in) + NADH + H(+) = a ubiquinol + n Na(+)(out) + NAD(+). In terms of biological role, NQR complex catalyzes the reduction of ubiquinone-1 to ubiquinol by two successive reactions, coupled with the transport of Na(+) ions from the cytoplasm to the periplasm. NqrA to NqrE are probably involved in the second step, the conversion of ubisemiquinone to ubiquinol. The chain is Na(+)-translocating NADH-quinone reductase subunit A from Chlamydia trachomatis serovar A (strain ATCC VR-571B / DSM 19440 / HAR-13).